The following is an 83-amino-acid chain: Arminin 4364 (83 aa).

Residues 1-18 (MKTVFAILFLAFIALTYA) form the signal peptide. Positions 19-55 (RSYEDVKEEIKNEVEKEILEDLEKETDELNERKINDA) are excised as a propeptide. Position 80 is a valine amide (valine 80).

The protein belongs to the arminin family. In terms of tissue distribution, expressed in entodermal epithelium along the body column.

It localises to the secreted. Its subcellular location is the target cell membrane. Antimicrobial peptide with a broad-spectrum antimicrobial activity. Keeps its antibacterial activity under a wide range of salt concentrations that mimic physiological conditions of human blood, which is surprising, since Hydra is an obligate freshwater animal with nearly no salt tolerance. Does not affect red blood cells. The polypeptide is Arminin 4364 (Hydra vulgaris (Hydra)).